We begin with the raw amino-acid sequence, 273 residues long: Bis(5'-nucleosyl)-tetraphosphatase, symmetrical (273 aa).

It belongs to the Ap4A hydrolase family.

It carries out the reaction P(1),P(4)-bis(5'-adenosyl) tetraphosphate + H2O = 2 ADP + 2 H(+). Its function is as follows. Hydrolyzes diadenosine 5',5'''-P1,P4-tetraphosphate to yield ADP. The polypeptide is Bis(5'-nucleosyl)-tetraphosphatase, symmetrical (Histophilus somni (strain 2336) (Haemophilus somnus)).